Consider the following 117-residue polypeptide: Large ribosomal subunit protein bL19 (117 aa).

Belongs to the bacterial ribosomal protein bL19 family.

Its function is as follows. This protein is located at the 30S-50S ribosomal subunit interface and may play a role in the structure and function of the aminoacyl-tRNA binding site. In Shewanella halifaxensis (strain HAW-EB4), this protein is Large ribosomal subunit protein bL19.